Reading from the N-terminus, the 197-residue chain is Shikimate kinase (197 aa).

14–19 (GSGKST) contacts ATP. A Mg(2+)-binding site is contributed by Ser18. Residues Asp36, Arg60, and Gly82 each contribute to the substrate site. ATP is bound at residue Arg120. Arg147 serves as a coordination point for substrate.

This sequence belongs to the shikimate kinase family. Monomer. The cofactor is Mg(2+).

It is found in the cytoplasm. The catalysed reaction is shikimate + ATP = 3-phosphoshikimate + ADP + H(+). It functions in the pathway metabolic intermediate biosynthesis; chorismate biosynthesis; chorismate from D-erythrose 4-phosphate and phosphoenolpyruvate: step 5/7. Catalyzes the specific phosphorylation of the 3-hydroxyl group of shikimic acid using ATP as a cosubstrate. This is Shikimate kinase from Prosthecochloris aestuarii (strain DSM 271 / SK 413).